Here is a 155-residue protein sequence, read N- to C-terminus: Protein-export protein SecB (155 aa).

Belongs to the SecB family. Homotetramer, a dimer of dimers. One homotetramer interacts with 1 SecA dimer.

The protein resides in the cytoplasm. Functionally, one of the proteins required for the normal export of preproteins out of the cell cytoplasm. It is a molecular chaperone that binds to a subset of precursor proteins, maintaining them in a translocation-competent state. It also specifically binds to its receptor SecA. In Psychromonas ingrahamii (strain DSM 17664 / CCUG 51855 / 37), this protein is Protein-export protein SecB.